A 219-amino-acid polypeptide reads, in one-letter code: MGQKVDPRGLRLGITRAWDSNWYADKKEYVKYFHEDVQIKEFIKKNYFHTGISKVRIERTSPSQVVVHIHTGKAGLIIGRKGAEIDALRAKLEKLTGKKVTVKVQEIKDLNGDAVLVAESIAAQIEKRIAYKKAMTQAISRSMKSPEVKGIKVMISGRLNGAEIARSEWAVEGKVPLHTLRADIDYAVATAHTTYGALGIKVWIFHGEVLPSKKEGGEA.

A KH type-2 domain is found at 39–108 (IKEFIKKNYF…KVTVKVQEIK (70 aa)).

Belongs to the universal ribosomal protein uS3 family. Part of the 30S ribosomal subunit. Forms a tight complex with proteins S10 and S14.

Its function is as follows. Binds the lower part of the 30S subunit head. Binds mRNA in the 70S ribosome, positioning it for translation. The sequence is that of Small ribosomal subunit protein uS3 from Fusobacterium nucleatum subsp. nucleatum (strain ATCC 25586 / DSM 15643 / BCRC 10681 / CIP 101130 / JCM 8532 / KCTC 2640 / LMG 13131 / VPI 4355).